We begin with the raw amino-acid sequence, 404 residues long: Glycerol-1-phosphate dehydrogenase [NAD(P)+] (404 aa).

Residues Asp-56, Gly-118–Asp-122, and Thr-140–Ser-143 each bind NAD(+). Substrate is bound at residue Asp-145. Residue Ser-149 coordinates NAD(+). Asp-192 is a binding site for substrate. Asp-192 and His-272 together coordinate Ni(2+). A substrate-binding site is contributed by His-276. His-292 lines the Ni(2+) pocket.

This sequence belongs to the glycerol-1-phosphate dehydrogenase family. In terms of assembly, homodimer. Ni(2+) serves as cofactor.

The protein localises to the cytoplasm. The enzyme catalyses sn-glycerol 1-phosphate + NAD(+) = dihydroxyacetone phosphate + NADH + H(+). The catalysed reaction is sn-glycerol 1-phosphate + NADP(+) = dihydroxyacetone phosphate + NADPH + H(+). Catalyzes the NAD(P)H-dependent reduction of dihydroxyacetonephosphate (DHAP or glycerone phosphate) to glycerol 1-phosphate (G1P). The G1P thus generated is probably used for the synthesis of phosphoglycerolipids in Gram-positive bacterial species. The sequence is that of Glycerol-1-phosphate dehydrogenase [NAD(P)+] from Geobacillus stearothermophilus (Bacillus stearothermophilus).